The primary structure comprises 211 residues: Cytochrome c biogenesis ATP-binding export protein CcmA 2 (211 aa).

In terms of domain architecture, ABC transporter spans 6–208 (LEARELGVRR…GAVLDLATDA (203 aa)). Residue 38–45 (GPNGAGKT) coordinates ATP.

This sequence belongs to the ABC transporter superfamily. CcmA exporter (TC 3.A.1.107) family. The complex is composed of two ATP-binding proteins (CcmA) and two transmembrane proteins (CcmB).

The protein resides in the cell inner membrane. It catalyses the reaction heme b(in) + ATP + H2O = heme b(out) + ADP + phosphate + H(+). Part of the ABC transporter complex CcmAB involved in the biogenesis of c-type cytochromes; once thought to export heme, this seems not to be the case, but its exact role is uncertain. Responsible for energy coupling to the transport system. The sequence is that of Cytochrome c biogenesis ATP-binding export protein CcmA 2 from Cupriavidus metallidurans (strain ATCC 43123 / DSM 2839 / NBRC 102507 / CH34) (Ralstonia metallidurans).